The primary structure comprises 487 residues: N-succinylglutamate 5-semialdehyde dehydrogenase (487 aa).

Residue 221 to 226 (GSSDTG) participates in NAD(+) binding. Active-site residues include glutamate 244 and cysteine 278.

Belongs to the aldehyde dehydrogenase family. AstD subfamily.

The catalysed reaction is N-succinyl-L-glutamate 5-semialdehyde + NAD(+) + H2O = N-succinyl-L-glutamate + NADH + 2 H(+). It participates in amino-acid degradation; L-arginine degradation via AST pathway; L-glutamate and succinate from L-arginine: step 4/5. Catalyzes the NAD-dependent reduction of succinylglutamate semialdehyde into succinylglutamate. This is N-succinylglutamate 5-semialdehyde dehydrogenase from Paraburkholderia xenovorans (strain LB400).